The sequence spans 528 residues: Chaperonin GroEL, chloroplastic (528 aa).

ATP contacts are provided by residues 29–32, 86–90, glycine 414, and aspartate 496; these read TLGP and DGTTT.

Belongs to the chaperonin (HSP60) family. Forms a cylinder of 14 subunits composed of two heptameric rings stacked back-to-back. Interacts with the co-chaperonin GroES.

It is found in the plastid. It localises to the chloroplast. It carries out the reaction ATP + H2O + a folded polypeptide = ADP + phosphate + an unfolded polypeptide.. Functionally, together with its co-chaperonin GroES, plays an essential role in assisting protein folding. The GroEL-GroES system forms a nano-cage that allows encapsulation of the non-native substrate proteins and provides a physical environment optimized to promote and accelerate protein folding. The polypeptide is Chaperonin GroEL, chloroplastic (Gracilaria tenuistipitata var. liui (Red alga)).